Reading from the N-terminus, the 393-residue chain is Staphopain B (393 aa).

The signal sequence occupies residues 1–36 (MNSSYKSRVFNIISIIMVSMLILSLGAFANNNKAKA). The propeptide occupies 37–219 (DSHSKQLEIN…KVEENEAIQE (183 aa)). Active-site residues include cysteine 243, histidine 340, and asparagine 360.

It belongs to the peptidase C47 family. As to quaternary structure, in the cytoplasm, prematurely activated/folded SspB forms a stable non-covalent complex with SspC. Proteolytically cleaved by staphylococcal serine protease (SspA).

It localises to the secreted. Its activity is regulated as follows. Prematurely activated/folded staphopain B is inhibited by staphostatin B (SspC), which is probably required to protect staphylococcal cytoplasmic proteins from degradation by SspB. Functionally, cysteine protease that plays an important role in the inhibition of host innate immune response. Degrades host elastin, fibrogen, fibronectin and kininogen. Blocks phagocytosis of opsonised S.aureus by neutrophils and monocytes by inducing their death in a proteolytic activity-dependent manner. Decreases surface expression of the 'don't eat me' signal CD31 on neutrophils. Cleaves host galectin-3/LGALS3, thereby inhibiting the neutrophil-activating ability of the lectin. The chain is Staphopain B (sspB) from Staphylococcus aureus (strain Mu50 / ATCC 700699).